Here is a 422-residue protein sequence, read N- to C-terminus: Isocitrate dehydrogenase [NADP] (422 aa).

Residue T94 participates in NADP(+) binding. The D-threo-isocitrate site is built by S103, N105, R109, R119, and R143. Residue D310 coordinates Mg(2+). NADP(+)-binding positions include 344–350, N357, Y396, and R400; that span reads HGTAPKY.

This sequence belongs to the isocitrate and isopropylmalate dehydrogenases family. In terms of assembly, homodimer. Mg(2+) is required as a cofactor. It depends on Mn(2+) as a cofactor.

The enzyme catalyses D-threo-isocitrate + NADP(+) = 2-oxoglutarate + CO2 + NADPH. Its function is as follows. Catalyzes the oxidative decarboxylation of isocitrate to 2-oxoglutarate and carbon dioxide with the concomitant reduction of NADP(+). The polypeptide is Isocitrate dehydrogenase [NADP] (icd) (Staphylococcus aureus (strain COL)).